The chain runs to 348 residues: Aminotransferase atnJ (348 aa).

Position 79 (arginine 79) interacts with pyridoxal 5'-phosphate. Lysine 180 carries the post-translational modification N6-(pyridoxal phosphate)lysine. Residue glutamate 216 coordinates pyridoxal 5'-phosphate.

This sequence belongs to the class-IV pyridoxal-phosphate-dependent aminotransferase family. Requires pyridoxal 5'-phosphate as cofactor.

It participates in secondary metabolite biosynthesis. In terms of biological role, aminotransferase; part of the gene cluster that mediates the biosynthesis of aspercryptins, linear lipopeptides built from six amino acids including 2 highly unusual and nonproteogenic amino acids, 2-amino-octanoic acid (2aoa) and 2-amino-dodecanol (2adol). The core structure of aspercryptins is as follows: Ser/Ala-Thr-Ile/Val-2aoa-Asn-2adol. The first step of aspercryptin biosynthesis is the generation of the fatty acid precursors, octanoic and dodecanoic acids, by the FAS subunits atnF and atnM. The fatty acid precursors are likely transformed into the corresponding alpha-amino fatty acids in three steps. First, they are hydroxylated by the cytochrome P450 monooxygenase atnE, then oxidized to the corresponding alpha-keto acids by the NAD(P)-dependent oxidoreductase atnD, and finally converted to the alpha-amino fatty acids by the PLP-dependent aminotransferases atnH or atnJ. the alpha-amino fatty acids, 2-amino-octanoic and 2-amino-dodecanoic acids, are recognized, activated, and covalently tethered to the NRPS atnA by its fourth and sixth adenylation domains. The second module of atnA is the Thr module and contains an epimerase (E) domain responsible for the epimerization of Thr to D-allo-Thr. Additionally, despite atnA having only one epimerase domain, the first amino acid of aspercryptin A1 is D-Ser, suggesting that serine is either loaded directly as D-Ser on the first module or that the epimerase domain in the threonine module epimerizes both L-Ser and L-Thr. After condensation of the hexapeptide of aspercryptin, the C-terminal reductase (TE) domain might be involved in the reductive release and production of the aldehyde hexapeptide. Further reduction would generate aspercryptins. The variety of aspercryptins produced reflects the flexibility of the atnA NRPS, allowing incorporation of alanine instead of serine, valine for isoleucine, and a C10 fatty amino alcohol instead of the C12 version. AtnB seems to be involved in the selectivity for Ile versus Val by the third module. Moreover, type B, C and D aspercryptins have an additional N-terminal cichorine, acetyl and propionyl group respectively. The protein is Aminotransferase atnJ of Emericella nidulans (strain FGSC A4 / ATCC 38163 / CBS 112.46 / NRRL 194 / M139) (Aspergillus nidulans).